We begin with the raw amino-acid sequence, 199 residues long: Imidazole glycerol phosphate synthase subunit HisH (199 aa).

Positions 1-199 (MTVVVDYEMG…QILKNLREML (199 aa)) constitute a Glutamine amidotransferase type-1 domain. Residue Cys-79 is the Nucleophile of the active site. Catalysis depends on residues His-180 and Glu-182.

Heterodimer of HisH and HisF.

It localises to the cytoplasm. It carries out the reaction 5-[(5-phospho-1-deoxy-D-ribulos-1-ylimino)methylamino]-1-(5-phospho-beta-D-ribosyl)imidazole-4-carboxamide + L-glutamine = D-erythro-1-(imidazol-4-yl)glycerol 3-phosphate + 5-amino-1-(5-phospho-beta-D-ribosyl)imidazole-4-carboxamide + L-glutamate + H(+). It catalyses the reaction L-glutamine + H2O = L-glutamate + NH4(+). The protein operates within amino-acid biosynthesis; L-histidine biosynthesis; L-histidine from 5-phospho-alpha-D-ribose 1-diphosphate: step 5/9. In terms of biological role, IGPS catalyzes the conversion of PRFAR and glutamine to IGP, AICAR and glutamate. The HisH subunit catalyzes the hydrolysis of glutamine to glutamate and ammonia as part of the synthesis of IGP and AICAR. The resulting ammonia molecule is channeled to the active site of HisF. This Carboxydothermus hydrogenoformans (strain ATCC BAA-161 / DSM 6008 / Z-2901) protein is Imidazole glycerol phosphate synthase subunit HisH.